The following is a 334-amino-acid chain: TPR repeat-containing protein MJ0798 (334 aa).

TPR repeat units follow at residues 102–135 (WKLW…NQNT), 137–168 (LLCK…DRNN), 169–202 (YKAL…NPND), 204–235 (EALE…KPDD), 236–269 (IDLI…NPNV), 273–306 (EQIY…NLYH), and 308–333 (EIYE…YKKL).

In Methanocaldococcus jannaschii (strain ATCC 43067 / DSM 2661 / JAL-1 / JCM 10045 / NBRC 100440) (Methanococcus jannaschii), this protein is TPR repeat-containing protein MJ0798.